Here is an 882-residue protein sequence, read N- to C-terminus: Valine--tRNA ligase (882 aa).

The 'HIGH' region signature appears at Pro52 to His62. The 'KMSKS' region motif lies at Lys539–Ser543. Lys542 is a binding site for ATP. A coiled-coil region spans residues Ile816 to Gln882.

The protein belongs to the class-I aminoacyl-tRNA synthetase family. ValS type 1 subfamily. In terms of assembly, monomer.

It is found in the cytoplasm. The enzyme catalyses tRNA(Val) + L-valine + ATP = L-valyl-tRNA(Val) + AMP + diphosphate. Its function is as follows. Catalyzes the attachment of valine to tRNA(Val). As ValRS can inadvertently accommodate and process structurally similar amino acids such as threonine, to avoid such errors, it has a 'posttransfer' editing activity that hydrolyzes mischarged Thr-tRNA(Val) in a tRNA-dependent manner. The polypeptide is Valine--tRNA ligase (Mycolicibacterium paratuberculosis (strain ATCC BAA-968 / K-10) (Mycobacterium paratuberculosis)).